The following is a 212-amino-acid chain: Phosphoribosylglycinamide formyltransferase (212 aa).

G11–N13 lines the N(1)-(5-phospho-beta-D-ribosyl)glycinamide pocket. (6R)-10-formyltetrahydrofolate is bound by residues R64, M89 to L92, and N106. H108 serves as the catalytic Proton donor. T140–D144 serves as a coordination point for (6R)-10-formyltetrahydrofolate. Q170 to E173 serves as a coordination point for N(1)-(5-phospho-beta-D-ribosyl)glycinamide.

The protein belongs to the GART family. As to quaternary structure, monomer. Homodimer below pH 6.8.

The enzyme catalyses N(1)-(5-phospho-beta-D-ribosyl)glycinamide + (6R)-10-formyltetrahydrofolate = N(2)-formyl-N(1)-(5-phospho-beta-D-ribosyl)glycinamide + (6S)-5,6,7,8-tetrahydrofolate + H(+). The protein operates within purine metabolism; IMP biosynthesis via de novo pathway; N(2)-formyl-N(1)-(5-phospho-D-ribosyl)glycinamide from N(1)-(5-phospho-D-ribosyl)glycinamide (10-formyl THF route): step 1/1. With respect to regulation, inhibited by N10-(bromoacetyl)-5,8-dideazafolate. Its function is as follows. Catalyzes the transfer of a formyl group from 10-formyltetrahydrofolate to 5-phospho-ribosyl-glycinamide (GAR), producing 5-phospho-ribosyl-N-formylglycinamide (FGAR) and tetrahydrofolate. The polypeptide is Phosphoribosylglycinamide formyltransferase (Escherichia coli (strain K12)).